The sequence spans 193 residues: Holliday junction branch migration complex subunit RuvA (193 aa).

The segment at 1–64 is domain I; sequence MIGRIAGILL…EDANLLYGFL (64 aa). The tract at residues 65-139 is domain II; it reads TPQERTTFRE…GKLGADLGEL (75 aa). Residues 139 to 143 are flexible linker; it reads LAGAA. The segment at 144 to 193 is domain III; the sequence is SPSDHATDILNALLALGYSEKEGLAAIKNVPAGTGVSEGIKLALKALSKV.

This sequence belongs to the RuvA family. In terms of assembly, homotetramer. Forms an RuvA(8)-RuvB(12)-Holliday junction (HJ) complex. HJ DNA is sandwiched between 2 RuvA tetramers; dsDNA enters through RuvA and exits via RuvB. An RuvB hexamer assembles on each DNA strand where it exits the tetramer. Each RuvB hexamer is contacted by two RuvA subunits (via domain III) on 2 adjacent RuvB subunits; this complex drives branch migration. In the full resolvosome a probable DNA-RuvA(4)-RuvB(12)-RuvC(2) complex forms which resolves the HJ.

The protein localises to the cytoplasm. In terms of biological role, the RuvA-RuvB-RuvC complex processes Holliday junction (HJ) DNA during genetic recombination and DNA repair, while the RuvA-RuvB complex plays an important role in the rescue of blocked DNA replication forks via replication fork reversal (RFR). RuvA specifically binds to HJ cruciform DNA, conferring on it an open structure. The RuvB hexamer acts as an ATP-dependent pump, pulling dsDNA into and through the RuvAB complex. HJ branch migration allows RuvC to scan DNA until it finds its consensus sequence, where it cleaves and resolves the cruciform DNA. This chain is Holliday junction branch migration complex subunit RuvA, found in Burkholderia lata (strain ATCC 17760 / DSM 23089 / LMG 22485 / NCIMB 9086 / R18194 / 383).